The following is a 317-amino-acid chain: Tyrosine--tRNA ligase (317 aa).

Residue tyrosine 33 coordinates L-tyrosine. A 'HIGH' region motif is present at residues 38–46 (PSGKIHMGH). Residues tyrosine 155, glutamine 159, aspartate 162, and glutamine 177 each coordinate L-tyrosine. The short motif at 211–215 (KMSSS) is the 'KMSKS' region element. Serine 214 contributes to the ATP binding site.

The protein belongs to the class-I aminoacyl-tRNA synthetase family. TyrS type 3 subfamily. As to quaternary structure, homodimer.

Its subcellular location is the cytoplasm. It catalyses the reaction tRNA(Tyr) + L-tyrosine + ATP = L-tyrosyl-tRNA(Tyr) + AMP + diphosphate + H(+). In terms of biological role, catalyzes the attachment of tyrosine to tRNA(Tyr) in a two-step reaction: tyrosine is first activated by ATP to form Tyr-AMP and then transferred to the acceptor end of tRNA(Tyr). This is Tyrosine--tRNA ligase from Methanococcoides burtonii (strain DSM 6242 / NBRC 107633 / OCM 468 / ACE-M).